Here is a 96-residue protein sequence, read N- to C-terminus: Large ribosomal subunit protein bL28 (96 aa).

It belongs to the bacterial ribosomal protein bL28 family.

The protein is Large ribosomal subunit protein bL28 of Leptospira biflexa serovar Patoc (strain Patoc 1 / Ames).